The following is a 381-amino-acid chain: Metacaspase-8 (381 aa).

Active-site residues include histidine 86 and cysteine 140. Cysteine 140 carries the post-translational modification S-nitrosocysteine.

It belongs to the peptidase C14B family. In terms of processing, proteolytically processed; by an autocatalytic mechanism.

Its function is as follows. Cysteine protease that cleaves specifically after arginine residues. Does not cleave caspase-specific substrates. May be involved in the modulation of programmed cell death activated by oxidative stress. This Arabidopsis thaliana (Mouse-ear cress) protein is Metacaspase-8 (AMC8).